Here is a 496-residue protein sequence, read N- to C-terminus: Probable chlorophyll(ide) b reductase NYC1, chloroplastic (496 aa).

The N-terminal 43 residues, 1 to 43 (MTTLTKIQVYPQVLEHRLFFRDPIRVGSRLTCRERSNRVYVHR), are a transit peptide targeting the chloroplast. 2 helical membrane passes run 105 to 125 (YIVT…LSGG) and 132 to 152 (LVWY…ANMV). 166–190 (ITGSTRGLGKALAREFLLSGDRVIV) provides a ligand contact to NAD(+). Residues 195 to 224 (SESVDMTVKELEQNLKEIMSNASESARKKL) are a coiled coil. Tyr330 functions as the Proton acceptor in the catalytic mechanism. The helical transmembrane segment at 470-490 (WVSVFSLSVVCAFIILQSTTP) threads the bilayer.

This sequence belongs to the short-chain dehydrogenases/reductases (SDR) family. In terms of assembly, interacts with NOL to form a complex that acts as a chlorophyll b reductase. Interacts with HCAR, RCCR, SGR1 and the LHCII complex. Part of a SGR1-CCE-LHCII complex, which acts in chlorophyll breakdown.

It is found in the plastid. The protein localises to the chloroplast thylakoid membrane. It carries out the reaction 7(1)-hydroxychlorophyllide a + NAD(+) = chlorophyllide b + NADH + H(+). The enzyme catalyses 7(1)-hydroxychlorophyllide a + NADP(+) = chlorophyllide b + NADPH + H(+). Functionally, involved in chlorophyll b degradation. Belongs to the chlorophyll catabolic enzymes (CCEs). This chain is Probable chlorophyll(ide) b reductase NYC1, chloroplastic (NYC1), found in Arabidopsis thaliana (Mouse-ear cress).